The chain runs to 346 residues: MFEWMKNKKAISPILALLIVLGVTIVVGAVFYAWGSGLFNNSQQSTQSALEGTTSTITYAAGAIGVGVPKEIDVEGDLDLTYPTPDYKLSHLTTTDYGSYDERLIVPVPLTLENYYDSTLTNVKIESDGATEVAGLTLKKITLNYNGQNYDAYLLCTNDGTPFKGILNRTGIYPDATWTGDDGNNYTSVYYILAPNSVTGVAAVDGSKDLSVTTAKKWPYSQNDVQSMRLYAGGFNNMWYACAVNGSYSSWTNTLTATKFIGWNTAQAFYKYKTPIDAKFYTSEWDVGTLHKGEKVSKEIFFFFGSSMGFQEEPSGETTVKIPVKVVSDQGVYKQVDVNIVLKDRL.

Residues 1-28 form the signal peptide; sequence MFEWMKNKKAISPILALLIVLGVTIVVG.

This is an uncharacterized protein from Methanocaldococcus jannaschii (strain ATCC 43067 / DSM 2661 / JAL-1 / JCM 10045 / NBRC 100440) (Methanococcus jannaschii).